The sequence spans 258 residues: Imidazole glycerol phosphate synthase subunit HisF (258 aa).

Catalysis depends on residues aspartate 11 and aspartate 130.

This sequence belongs to the HisA/HisF family. As to quaternary structure, heterodimer of HisH and HisF.

It localises to the cytoplasm. It carries out the reaction 5-[(5-phospho-1-deoxy-D-ribulos-1-ylimino)methylamino]-1-(5-phospho-beta-D-ribosyl)imidazole-4-carboxamide + L-glutamine = D-erythro-1-(imidazol-4-yl)glycerol 3-phosphate + 5-amino-1-(5-phospho-beta-D-ribosyl)imidazole-4-carboxamide + L-glutamate + H(+). The protein operates within amino-acid biosynthesis; L-histidine biosynthesis; L-histidine from 5-phospho-alpha-D-ribose 1-diphosphate: step 5/9. Its function is as follows. IGPS catalyzes the conversion of PRFAR and glutamine to IGP, AICAR and glutamate. The HisF subunit catalyzes the cyclization activity that produces IGP and AICAR from PRFAR using the ammonia provided by the HisH subunit. This Shigella sonnei (strain Ss046) protein is Imidazole glycerol phosphate synthase subunit HisF.